Reading from the N-terminus, the 633-residue chain is tRNA uridine 5-carboxymethylaminomethyl modification enzyme MnmG (633 aa).

Residues 15-20 (GAGHAG), Ile-127, and Ser-182 contribute to the FAD site. An NAD(+)-binding site is contributed by 276 to 290 (GPRYCPSIEDKIVRF). Gln-373 contacts FAD.

Belongs to the MnmG family. In terms of assembly, homodimer. Heterotetramer of two MnmE and two MnmG subunits. Requires FAD as cofactor.

The protein resides in the cytoplasm. Functionally, NAD-binding protein involved in the addition of a carboxymethylaminomethyl (cmnm) group at the wobble position (U34) of certain tRNAs, forming tRNA-cmnm(5)s(2)U34. In Streptococcus agalactiae serotype III (strain NEM316), this protein is tRNA uridine 5-carboxymethylaminomethyl modification enzyme MnmG.